Reading from the N-terminus, the 62-residue chain is Large ribosomal subunit protein bL28 (62 aa).

The protein belongs to the bacterial ribosomal protein bL28 family.

This Wolinella succinogenes (strain ATCC 29543 / DSM 1740 / CCUG 13145 / JCM 31913 / LMG 7466 / NCTC 11488 / FDC 602W) (Vibrio succinogenes) protein is Large ribosomal subunit protein bL28.